The chain runs to 278 residues: Pantothenate synthetase (278 aa).

27-34 (MGYLHEGH) contacts ATP. His34 (proton donor) is an active-site residue. Residue Gln58 participates in (R)-pantoate binding. Gln58 is a binding site for beta-alanine. 144–147 (GQKD) lines the ATP pocket. A (R)-pantoate-binding site is contributed by Gln150. ATP-binding positions include Val173 and 181-184 (MSSR).

It belongs to the pantothenate synthetase family. As to quaternary structure, homodimer.

It is found in the cytoplasm. It carries out the reaction (R)-pantoate + beta-alanine + ATP = (R)-pantothenate + AMP + diphosphate + H(+). Its pathway is cofactor biosynthesis; (R)-pantothenate biosynthesis; (R)-pantothenate from (R)-pantoate and beta-alanine: step 1/1. Catalyzes the condensation of pantoate with beta-alanine in an ATP-dependent reaction via a pantoyl-adenylate intermediate. The protein is Pantothenate synthetase of Roseiflexus sp. (strain RS-1).